Here is a 237-residue protein sequence, read N- to C-terminus: Speedy protein E4 (237 aa).

Positions 1–61 are disordered; sequence MASGQARPPF…KRKSEWSDES (61 aa).

It belongs to the Speedy/Ringo family. Predominantly expressed in testis.

This chain is Speedy protein E4, found in Homo sapiens (Human).